Reading from the N-terminus, the 427-residue chain is Glutamate-1-semialdehyde 2,1-aminomutase (427 aa).

The residue at position 267 (K267) is an N6-(pyridoxal phosphate)lysine.

The protein belongs to the class-III pyridoxal-phosphate-dependent aminotransferase family. HemL subfamily. In terms of assembly, homodimer. The cofactor is pyridoxal 5'-phosphate.

It is found in the cytoplasm. The catalysed reaction is (S)-4-amino-5-oxopentanoate = 5-aminolevulinate. It participates in porphyrin-containing compound metabolism; protoporphyrin-IX biosynthesis; 5-aminolevulinate from L-glutamyl-tRNA(Glu): step 2/2. The chain is Glutamate-1-semialdehyde 2,1-aminomutase from Thermodesulfovibrio yellowstonii (strain ATCC 51303 / DSM 11347 / YP87).